The chain runs to 285 residues: Ribose-phosphate pyrophosphokinase (285 aa).

Residues 33–35 (DGE) and 91–92 (RQ) each bind ATP. Mg(2+)-binding residues include H125 and D162. K185 is a catalytic residue. D-ribose 5-phosphate contacts are provided by residues R187, D211, and 215–219 (STGGT).

The protein belongs to the ribose-phosphate pyrophosphokinase family. Class III (archaeal) subfamily. Mg(2+) serves as cofactor.

It localises to the cytoplasm. It catalyses the reaction D-ribose 5-phosphate + ATP = 5-phospho-alpha-D-ribose 1-diphosphate + AMP + H(+). It functions in the pathway metabolic intermediate biosynthesis; 5-phospho-alpha-D-ribose 1-diphosphate biosynthesis; 5-phospho-alpha-D-ribose 1-diphosphate from D-ribose 5-phosphate (route I): step 1/1. Functionally, involved in the biosynthesis of the central metabolite phospho-alpha-D-ribosyl-1-pyrophosphate (PRPP) via the transfer of pyrophosphoryl group from ATP to 1-hydroxyl of ribose-5-phosphate (Rib-5-P). The chain is Ribose-phosphate pyrophosphokinase from Methanothermobacter thermautotrophicus (strain ATCC 29096 / DSM 1053 / JCM 10044 / NBRC 100330 / Delta H) (Methanobacterium thermoautotrophicum).